Reading from the N-terminus, the 373-residue chain is Indole glucosinolate O-methyltransferase 3 (373 aa).

G217, D240, D260, M261, and K274 together coordinate S-adenosyl-L-homocysteine. The active-site Proton acceptor is the H278.

The protein belongs to the class I-like SAM-binding methyltransferase superfamily. Cation-independent O-methyltransferase family.

It participates in secondary metabolite biosynthesis. Its function is as follows. Involved in indole glucosinolate biosynthesis. Catalyzes methoxylation reactions of the glucosinolate indole ring. Converts the hydroxy intermediates 4-hydroxy-indol-3-yl-methylglucosinolate (4OH-I3M) and 1-hydroxy-indol-3-yl-methylglucosinolate (1OH-I3M) to 4-methoxy-indol-3-yl-methylglucosinolate (4MO-I3M) and 1-methoxy-indol-3-yl-methylglucosinolate(1MO-I3M), respectively. In Arabidopsis thaliana (Mouse-ear cress), this protein is Indole glucosinolate O-methyltransferase 3.